We begin with the raw amino-acid sequence, 363 residues long: Dihydroorotate dehydrogenase (quinone) (363 aa).

Residues 67 to 71 (AGYDK) and threonine 91 each bind FMN. Lysine 71 serves as a coordination point for substrate. 116–120 (NRMGF) is a binding site for substrate. FMN-binding residues include asparagine 145 and asparagine 178. Asparagine 178 contributes to the substrate binding site. Serine 181 acts as the Nucleophile in catalysis. Asparagine 183 is a substrate binding site. Positions 224 and 254 each coordinate FMN. 255–256 (NT) is a binding site for substrate. Residues glycine 275, glycine 304, and 325 to 326 (YS) contribute to the FMN site.

The protein belongs to the dihydroorotate dehydrogenase family. Type 2 subfamily. Monomer. It depends on FMN as a cofactor.

It is found in the cell membrane. The catalysed reaction is (S)-dihydroorotate + a quinone = orotate + a quinol. Its pathway is pyrimidine metabolism; UMP biosynthesis via de novo pathway; orotate from (S)-dihydroorotate (quinone route): step 1/1. Catalyzes the conversion of dihydroorotate to orotate with quinone as electron acceptor. This chain is Dihydroorotate dehydrogenase (quinone), found in Acidithiobacillus ferrooxidans (strain ATCC 23270 / DSM 14882 / CIP 104768 / NCIMB 8455) (Ferrobacillus ferrooxidans (strain ATCC 23270)).